Reading from the N-terminus, the 546-residue chain is uncharacterized protein (546 aa).

This sequence belongs to the IIV-6 098R family.

This is an uncharacterized protein from Aedes vexans (Inland floodwater mosquito).